Here is a 330-residue protein sequence, read N- to C-terminus: Aspartate--ammonia ligase (330 aa).

This sequence belongs to the class-II aminoacyl-tRNA synthetase family. AsnA subfamily. As to quaternary structure, homodimer.

The protein localises to the cytoplasm. The catalysed reaction is L-aspartate + NH4(+) + ATP = L-asparagine + AMP + diphosphate + H(+). It functions in the pathway amino-acid biosynthesis; L-asparagine biosynthesis; L-asparagine from L-aspartate (ammonia route): step 1/1. In Salmonella typhi, this protein is Aspartate--ammonia ligase.